Reading from the N-terminus, the 156-residue chain is Egg-lysin (156 aa).

Positions 1–18 (MKLLVLCVFAMMATLAVS) are cleaved as a signal peptide.

Monomer. Homodimer. Molecules associate into dimers and then rapidly dissociate again. Interacts (as a monomer) with the egg vitelline layer protein VERL (via VERL repeats); each VERL chain can bind multiple copies of lysin. As to expression, sperm.

The protein localises to the cytoplasmic vesicle. It is found in the secretory vesicle. Its subcellular location is the acrosome lumen. Functionally, creates a 3 um hole in the egg vitelline layer through which the sperm passes. Does not have enzyme activity. Species-specific interaction between the sperm protein lysin and the egg protein VERL exposes a basic surface on lysin that may dissociate the egg vitelline layer via electrostatic repulsion. Plays a role in ensuring species-specific fertilization. The sequence is that of Egg-lysin from Haliotis cracherodii (Black abalone).